Consider the following 169-residue polypeptide: N-alpha-acetyltransferase 50 (169 aa).

The region spanning 5–154 (IELGDVTPHN…DAHVLQKNLK (150 aa)) is the N-acetyltransferase domain. A substrate-binding site is contributed by Tyr-30. The active site involves Tyr-72. Residue Met-74 participates in substrate binding. 76 to 89 (LGCLAPYRRLGIGT) contacts acetyl-CoA. A CoA-binding site is contributed by 78–89 (CLAPYRRLGIGT). The active site involves His-111. Residue 116 to 125 (NESAIDFYRK) coordinates CoA. The interval 137–140 (YYKR) is substrate.

It belongs to the acetyltransferase family. GNAT subfamily.

The protein resides in the cytoplasm. It localises to the nucleus. The catalysed reaction is N-terminal L-methionyl-L-alanyl-[protein] + acetyl-CoA = N-terminal N(alpha)-acetyl-L-methionyl-L-alanyl-[protein] + CoA + H(+). It catalyses the reaction N-terminal L-methionyl-L-seryl-[protein] + acetyl-CoA = N-terminal N(alpha)-acetyl-L-methionyl-L-seryl-[protein] + CoA + H(+). The enzyme catalyses N-terminal L-methionyl-L-valyl-[protein] + acetyl-CoA = N-terminal N(alpha)-acetyl-L-methionyl-L-valyl-[protein] + CoA + H(+). It carries out the reaction N-terminal L-methionyl-L-threonyl-[protein] + acetyl-CoA = N-terminal N(alpha)-acetyl-L-methionyl-L-threonyl-[protein] + CoA + H(+). The catalysed reaction is N-terminal L-methionyl-L-lysyl-[protein] + acetyl-CoA = N-terminal N(alpha)-acetyl-L-methionyl-L-lysyl-[protein] + CoA + H(+). It catalyses the reaction N-terminal L-methionyl-L-leucyl-[protein] + acetyl-CoA = N-terminal N(alpha)-acetyl-L-methionyl-L-leucyl-[protein] + CoA + H(+). The enzyme catalyses N-terminal L-methionyl-L-phenylalanyl-[protein] + acetyl-CoA = N-terminal N(alpha)-acetyl-L-methionyl-L-phenylalanyl-[protein] + CoA + H(+). It carries out the reaction N-terminal L-methionyl-L-tyrosyl-[protein] + acetyl-CoA = N-terminal N(alpha)-acetyl-L-methionyl-L-tyrosyl-[protein] + CoA + H(+). N-alpha-acetyltransferase that acetylates the N-terminus of proteins that retain their initiating methionine. Has a broad substrate specificity: able to acetylate the initiator methionine of most peptides, except for those with a proline in second position. Also displays N-epsilon-acetyltransferase activity by mediating acetylation of the side chain of specific lysines on proteins. The relevance of N-epsilon-acetyltransferase activity is however unclear. Required for sister chromatid cohesion during mitosis by promoting binding of CDCA5/sororin to cohesin. This chain is N-alpha-acetyltransferase 50 (naa50), found in Xenopus tropicalis (Western clawed frog).